A 581-amino-acid chain; its full sequence is MSKDLDKEDVLYKKRHSIAHVMAEAVRDLFPNTKIAIGPPIKDGFYYDFEFKKQITEDSLLDIENRMREILKTGSSFEKELISVEQALEIFKDEPYKIDLIKNFDLQNEISIYKSHNFIDLCRGPHVDNMNKIDPKAFKLTSIAGAYWRGNEKNTMLTRIYGTLWNNEKELRSYLNLREEIKKRDHRKLGKELDLFSIHEEIGPGLVFFHPNGAKIRALIEDFWREEHSKNGYDILFTPHIGKSWLWQTSGHLDFYKDSMFEKMEMDKSDYYLKPMNCPFHIAIYNTGKHSYRDLPFRWAELGTVYRYEKIGALHGIMRARGFTQDDAHIICTHSQVLDEIKEVLRFAIYMWSKFGFNSLKAYLSTKPDKFVGNDSDWEMSLKVLEEALSGFEVPYEIDKGGGAFYGPKIDLKIVDSLEREWQMSTIQFDFNLPERFNMTYTAEDGKEKRPFMIHRALLGSIERFFGILIEHYGGAFPLWLSPIQAVIIPVNNAVEDYAIKVFNKFKNEGMRIKLDNTSSRMNAKIREYQAKKIPYMFIIGEREAKEEKISIRTRTNEQINGLELDEALKLILLKIRDKEI.

The segment at 185-478 is catalytic; it reads DHRKLGKELD…LIEHYGGAFP (294 aa). Residues Cys-278, His-329, and His-455 each coordinate Zn(2+).

The protein belongs to the class-II aminoacyl-tRNA synthetase family. In terms of assembly, homodimer. Zn(2+) is required as a cofactor.

The protein resides in the cytoplasm. The enzyme catalyses tRNA(Thr) + L-threonine + ATP = L-threonyl-tRNA(Thr) + AMP + diphosphate + H(+). Catalyzes the attachment of threonine to tRNA(Thr) in a two-step reaction: L-threonine is first activated by ATP to form Thr-AMP and then transferred to the acceptor end of tRNA(Thr). Also edits incorrectly charged L-seryl-tRNA(Thr). This chain is Threonine--tRNA ligase, found in Borreliella afzelii (strain PKo) (Borrelia afzelii).